Reading from the N-terminus, the 45-residue chain is Iota-conotoxin-like R11.10 (45 aa).

Cystine bridges form between cysteine 5–cysteine 19, cysteine 12–cysteine 22, cysteine 18–cysteine 27, and cysteine 21–cysteine 36. Leucine 43 is modified (D-leucine). Position 45 (arginine 45) is a propeptide, removed by a carboxypeptidase.

It belongs to the conotoxin I1 superfamily. In terms of tissue distribution, expressed by the venom duct.

Its subcellular location is the secreted. Iota-conotoxins bind to voltage-gated sodium channels (Nav) and act as agonists by shifting the voltage-dependence of activation to more hyperpolarized levels. Produces general excitatory symptoms. This chain is Iota-conotoxin-like R11.10, found in Conus radiatus (Rayed cone).